The chain runs to 157 residues: Protein FAM162B (157 aa).

Residues 104 to 123 traverse the membrane as a helical segment; that stretch reads ACYIMIGLTIVACFAVIVSA.

It belongs to the UPF0389 family.

The protein localises to the membrane. The sequence is that of Protein FAM162B (Fam162b) from Mus musculus (Mouse).